A 354-amino-acid polypeptide reads, in one-letter code: Uroporphyrinogen decarboxylase (354 aa).

Substrate contacts are provided by residues 27–31, aspartate 77, tyrosine 154, threonine 209, and histidine 327; that span reads RQAGR.

Belongs to the uroporphyrinogen decarboxylase family. Homodimer.

The protein resides in the cytoplasm. The catalysed reaction is uroporphyrinogen III + 4 H(+) = coproporphyrinogen III + 4 CO2. It functions in the pathway porphyrin-containing compound metabolism; protoporphyrin-IX biosynthesis; coproporphyrinogen-III from 5-aminolevulinate: step 4/4. Functionally, catalyzes the decarboxylation of four acetate groups of uroporphyrinogen-III to yield coproporphyrinogen-III. In Serratia proteamaculans (strain 568), this protein is Uroporphyrinogen decarboxylase.